A 759-amino-acid chain; its full sequence is Forkhead box protein M1 (759 aa).

Disordered regions lie at residues 1 to 54 (MRTS…AESS) and 94 to 165 (KGKE…QRQE). Positions 36 to 54 (PGQQEPTQAQASQDVAESS) are enriched in polar residues. Residues 141-151 (LGPKPGAKGVP) show a composition bias toward low complexity. Glycyl lysine isopeptide (Lys-Gly) (interchain with G-Cter in SUMO2) cross-links involve residues lysine 200 and lysine 324. Positions 234 to 326 (ERPPYSYMAM…LTLDQVFKPL (93 aa)) form a DNA-binding region, fork-head. The segment at 328–349 (PGSPQSPEHLESQQKRPNPELR) is disordered. The residue at position 330 (serine 330) is a Phosphoserine. A compositionally biased stretch (basic and acidic residues) spans 335–349 (EHLESQQKRPNPELR). A Glycyl lysine isopeptide (Lys-Gly) (interchain with G-Cter in SUMO2) cross-link involves residue lysine 355. Position 375 is a phosphoserine; by CHEK2 (serine 375). Glycyl lysine isopeptide (Lys-Gly) (interchain with G-Cter in SUMO2) cross-links involve residues lysine 421 and lysine 439. Serine 521 carries the phosphoserine modification. Disordered stretches follow at residues 530 to 556 (LVTK…CLDE), 572 to 643 (MEIL…PQGA), and 681 to 706 (LASD…LQVP). Over residues 531–542 (VTKRREKREVSR) the composition is skewed to basic and acidic residues. Polar residues predominate over residues 604-613 (PVSSTPSKSV). Position 608 is a phosphothreonine; by CDK1 (threonine 608). Threonine 624 carries the phosphothreonine modification. Phosphoserine; by PLK1 is present on residues serine 726 and serine 735.

In terms of processing, phosphorylated in M (mitotic) phase. Phosphorylation by the checkpoint kinase CHEK2 in response to DNA damage increases the FOXM1 protein stability probably stimulating the transcription of genes involved in DNA repair. Phosphorylated by CDK1 in late S and G2 phases, creating docking sites for the POLO box domains of PLK1. Subsequently, PLK1 binds and phosphorylates FOXM1, leading to activation of transcriptional activity and subsequent enhanced expression of key mitotic regulators. Phosphorylated by GSK3B leading to ubiquitination and proteasomal degradation. Highly expressed in thymus and testis, but weakly in intestine and lung. Appears to be expressed only in adult organs containing proliferating/cycling cells or in response to growth factors.

It is found in the nucleus. Transcription factor regulating the expression of cell cycle genes essential for DNA replication and mitosis. Plays a role in the control of cell proliferation. Also plays a role in DNA break repair, participating in the DNA damage checkpoint response. Promotes transcription of PHB2. This chain is Forkhead box protein M1 (Foxm1), found in Rattus norvegicus (Rat).